The sequence spans 177 residues: Cell division protein ZapC (177 aa).

The protein belongs to the ZapC family. Interacts directly with FtsZ.

It is found in the cytoplasm. Its function is as follows. Contributes to the efficiency of the cell division process by stabilizing the polymeric form of the cell division protein FtsZ. Acts by promoting interactions between FtsZ protofilaments and suppressing the GTPase activity of FtsZ. The polypeptide is Cell division protein ZapC (Shewanella frigidimarina (strain NCIMB 400)).